The sequence spans 88 residues: Small ribosomal subunit protein bS16c (88 aa).

The protein belongs to the bacterial ribosomal protein bS16 family.

The protein localises to the plastid. It is found in the chloroplast. In Jasminum nudiflorum (Winter jasmine), this protein is Small ribosomal subunit protein bS16c.